A 608-amino-acid polypeptide reads, in one-letter code: Albumin (608 aa).

Residues 1 to 18 (MKWVTFISLFFLFSSAYS) form the signal peptide. Positions 19-24 (RGLVRR) are excised as a propeptide. Albumin domains lie at 19 to 210 (RGLV…EALR), 211 to 403 (EKVL…EFKP), and 404 to 601 (LVDE…KLVA). Residue serine 29 is modified to Phosphoserine. Residues glutamate 30 and aspartate 37 each coordinate Ca(2+). An intrachain disulfide couples cysteine 77 to cysteine 86. Phosphoserine occurs at positions 82 and 89. Residue histidine 91 participates in Zn(2+) binding. 6 cysteine pairs are disulfide-bonded: cysteine 99–cysteine 115, cysteine 114–cysteine 125, cysteine 148–cysteine 193, cysteine 192–cysteine 201, cysteine 224–cysteine 270, and cysteine 269–cysteine 277. Lysine 229 is subject to N6-succinyllysine. Position 268 (glutamate 268) interacts with Ca(2+). The Zn(2+) site is built by histidine 271 and aspartate 273. Positions 273, 276, 279, and 283 each coordinate Ca(2+). 8 disulfide bridges follow: cysteine 289–cysteine 303, cysteine 302–cysteine 313, cysteine 340–cysteine 385, cysteine 384–cysteine 393, cysteine 416–cysteine 462, cysteine 461–cysteine 472, cysteine 485–cysteine 501, and cysteine 500–cysteine 511. Serine 443 carries the post-translational modification Phosphoserine. Phosphothreonine occurs at positions 444 and 446. An N6-succinyllysine modification is found at lysine 460. Serine 513 carries the phosphoserine modification. Disulfide bonds link cysteine 538/cysteine 583 and cysteine 582/cysteine 591. Position 558 is an N6-methyllysine (lysine 558). At threonine 570 the chain carries Phosphothreonine. Lysine 588 bears the N6-succinyllysine mark.

The protein belongs to the ALB/AFP/VDB family. As to quaternary structure, interacts with FCGRT; this interaction regulates ALB homeostasis. Interacts with TASOR. In plasma, occurs in a covalently-linked complex with chromophore-bound alpha-1-microglobulin; this interaction does not prevent fatty acid binding to ALB. Post-translationally, phosphorylated by FAM20C in the extracellular medium. As to expression, plasma.

The protein localises to the secreted. Its function is as follows. Binds water, Ca(2+), Na(+), K(+), fatty acids, hormones, bilirubin and drugs. Its main function is the regulation of the colloidal osmotic pressure of blood. Major zinc transporter in plasma, typically binds about 80% of all plasma zinc. Major calcium and magnesium transporter in plasma, binds approximately 45% of circulating calcium and magnesium in plasma. Potentially has more than two calcium-binding sites and might additionally bind calcium in a non-specific manner. The shared binding site between zinc and calcium at residue Asp-273 suggests a crosstalk between zinc and calcium transport in the blood. The rank order of affinity is zinc &gt; calcium &gt; magnesium. Binds to the bacterial siderophore enterobactin and inhibits enterobactin-mediated iron uptake of E.coli from ferric transferrin, and may thereby limit the utilization of iron and growth of enteric bacteria such as E.coli. Does not prevent iron uptake by the bacterial siderophore aerobactin. This is Albumin (ALB) from Canis lupus familiaris (Dog).